A 356-amino-acid chain; its full sequence is S-adenosylmethionine:tRNA ribosyltransferase-isomerase (356 aa).

This sequence belongs to the QueA family. Monomer.

It is found in the cytoplasm. It carries out the reaction 7-aminomethyl-7-carbaguanosine(34) in tRNA + S-adenosyl-L-methionine = epoxyqueuosine(34) in tRNA + adenine + L-methionine + 2 H(+). It participates in tRNA modification; tRNA-queuosine biosynthesis. Functionally, transfers and isomerizes the ribose moiety from AdoMet to the 7-aminomethyl group of 7-deazaguanine (preQ1-tRNA) to give epoxyqueuosine (oQ-tRNA). In Xanthomonas oryzae pv. oryzae (strain KACC10331 / KXO85), this protein is S-adenosylmethionine:tRNA ribosyltransferase-isomerase.